The primary structure comprises 376 residues: Multiphosphoryl transfer protein (376 aa).

In terms of domain architecture, PTS EIIA type-2 spans 2-142 (FQLSVQDIHP…EELRALLMGE (141 aa)). His-62 functions as the Tele-phosphohistidine intermediate; for EIIA activity in the catalytic mechanism. His-62 carries the post-translational modification Phosphohistidine; by HPr. The interval 156–284 (TLDVIASSLV…LTSDDALTDD (129 aa)) is m domain. An HPr domain is found at 285-375 (VLSAEFVVRN…DAIAAGLGEG (91 aa)). His-299 acts as the Pros-phosphohistidine intermediate; for HPr activity in catalysis. Phosphohistidine; by EI is present on His-299.

The protein resides in the cytoplasm. In terms of biological role, the phosphoenolpyruvate-dependent sugar phosphotransferase system (sugar PTS), a major carbohydrate active transport system, catalyzes the phosphorylation of incoming sugar substrates concomitantly with their translocation across the cell membrane. The enzyme II FruAB PTS system is involved in fructose transport. In Salmonella typhimurium (strain LT2 / SGSC1412 / ATCC 700720), this protein is Multiphosphoryl transfer protein (fruB).